Here is a 262-residue protein sequence, read N- to C-terminus: Probable dihydroorotate dehydrogenase B (NAD(+)), electron transfer subunit (262 aa).

One can recognise an FAD-binding FR-type domain in the interval 4–97; the sequence is VKPIPAEVVE…RGPYGKPFEV (94 aa). Residues cysteine 217, cysteine 222, cysteine 225, and cysteine 234 each contribute to the [2Fe-2S] cluster site.

The protein belongs to the PyrK family. Heterotetramer of 2 PyrK and 2 PyrD type B subunits. It depends on [2Fe-2S] cluster as a cofactor. The cofactor is FAD.

It participates in pyrimidine metabolism; UMP biosynthesis via de novo pathway; orotate from (S)-dihydroorotate (NAD(+) route): step 1/1. Responsible for channeling the electrons from the oxidation of dihydroorotate from the FMN redox center in the PyrD type B subunit to the ultimate electron acceptor NAD(+). In Methanopyrus kandleri (strain AV19 / DSM 6324 / JCM 9639 / NBRC 100938), this protein is Probable dihydroorotate dehydrogenase B (NAD(+)), electron transfer subunit.